The chain runs to 488 residues: 3-octaprenyl-4-hydroxybenzoate carboxy-lyase (488 aa).

Residue N172 participates in Mn(2+) binding. Residues 175–177 (IYR), 189–191 (RWL), and 194–195 (RG) each bind prenylated FMN. E238 contacts Mn(2+). D287 functions as the Proton donor in the catalytic mechanism.

The protein belongs to the UbiD family. Homohexamer. Requires prenylated FMN as cofactor. The cofactor is Mn(2+).

It is found in the cell membrane. The catalysed reaction is a 4-hydroxy-3-(all-trans-polyprenyl)benzoate + H(+) = a 2-(all-trans-polyprenyl)phenol + CO2. Its pathway is cofactor biosynthesis; ubiquinone biosynthesis. Catalyzes the decarboxylation of 3-octaprenyl-4-hydroxy benzoate to 2-octaprenylphenol, an intermediate step in ubiquinone biosynthesis. The protein is 3-octaprenyl-4-hydroxybenzoate carboxy-lyase of Halorhodospira halophila (strain DSM 244 / SL1) (Ectothiorhodospira halophila (strain DSM 244 / SL1)).